The primary structure comprises 273 residues: Sulfur carrier protein FdhD (273 aa).

The Cysteine persulfide intermediate role is filled by cysteine 124. Mo-bis(molybdopterin guanine dinucleotide) is bound at residue 263-268 (FCRQSR).

It belongs to the FdhD family.

It is found in the cytoplasm. Required for formate dehydrogenase (FDH) activity. Acts as a sulfur carrier protein that transfers sulfur from IscS to the molybdenum cofactor prior to its insertion into FDH. This chain is Sulfur carrier protein FdhD, found in Acinetobacter baylyi (strain ATCC 33305 / BD413 / ADP1).